Reading from the N-terminus, the 514-residue chain is Inosine-5'-monophosphate dehydrogenase (514 aa).

2 CBS domains span residues 112–171 (FISK…DTPV) and 175–233 (MTRR…PHST). NAD(+) contacts are provided by residues 270–272 (DSS) and 320–322 (GMG). Gly-322 and Gly-324 together coordinate K(+). Ser-325 is an IMP binding site. K(+) is bound at residue Cys-327. The Thioimidate intermediate role is filled by Cys-327. IMP is bound by residues 360 to 362 (DGG), 383 to 384 (GG), and 407 to 411 (YRGMG). Arg-425 (proton acceptor) is an active-site residue. Position 437 (Gln-437) interacts with IMP. 3 residues coordinate K(+): Glu-496, Gly-497, and Gly-498. Positions 512–514 (AKM) match the Microbody targeting signal motif.

This sequence belongs to the IMPDH/GMPR family. As to quaternary structure, heterotetramer. Interacts with glycosomal protein sorting receptor PEX5. Requires K(+) as cofactor.

It is found in the glycosome. The enzyme catalyses IMP + NAD(+) + H2O = XMP + NADH + H(+). The protein operates within purine metabolism; XMP biosynthesis via de novo pathway; XMP from IMP: step 1/1. Its activity is regulated as follows. Mycophenolic acid (MPA) is a non-competitive inhibitor that prevents formation of the closed enzyme conformation by binding to the same site as the amobile flap. In contrast, mizoribine monophosphate (MZP) is a competitive inhibitor that induces the closed conformation. MPA is a potent inhibitor of mammalian IMPDHs but a poor inhibitor of the bacterial enzymes. MZP is a more potent inhibitor of bacterial IMPDH. Potently inhibited by MPA. Inhibited by XMP and GMP. In terms of biological role, catalyzes the conversion of inosine 5'-phosphate (IMP) to xanthosine 5'-phosphate (XMP), the first committed and rate-limiting step in the de novo synthesis of guanine nucleotides, and therefore plays an important role in the regulation of cell growth. The sequence is that of Inosine-5'-monophosphate dehydrogenase from Leishmania donovani.